The following is a 118-amino-acid chain: Small ribosomal subunit protein uS13 (118 aa).

The interval 92-118 (KKHLPVRGQRTKTNARTRKGPRKPIKK) is disordered.

It belongs to the universal ribosomal protein uS13 family. Part of the 30S ribosomal subunit. Forms a loose heterodimer with protein S19. Forms two bridges to the 50S subunit in the 70S ribosome.

Located at the top of the head of the 30S subunit, it contacts several helices of the 16S rRNA. In the 70S ribosome it contacts the 23S rRNA (bridge B1a) and protein L5 of the 50S subunit (bridge B1b), connecting the 2 subunits; these bridges are implicated in subunit movement. Contacts the tRNAs in the A and P-sites. This Wigglesworthia glossinidia brevipalpis protein is Small ribosomal subunit protein uS13.